The primary structure comprises 276 residues: 4-deoxy-L-threo-5-hexosulose-uronate ketol-isomerase 1 (276 aa).

Zn(2+) contacts are provided by H194, H196, E201, and H243.

The protein belongs to the KduI family. Zn(2+) serves as cofactor.

It carries out the reaction 5-dehydro-4-deoxy-D-glucuronate = 3-deoxy-D-glycero-2,5-hexodiulosonate. Its pathway is glycan metabolism; pectin degradation; 2-dehydro-3-deoxy-D-gluconate from pectin: step 4/5. Functionally, catalyzes the isomerization of 5-dehydro-4-deoxy-D-glucuronate to 3-deoxy-D-glycero-2,5-hexodiulosonate. This Enterococcus faecalis (strain ATCC 700802 / V583) protein is 4-deoxy-L-threo-5-hexosulose-uronate ketol-isomerase 1 (kduI1).